Consider the following 102-residue polypeptide: NADH-quinone oxidoreductase subunit K (102 aa).

3 helical membrane passes run 5–25 (LEHYLTVAAILFTLGIFGIFL), 31–51 (IVILMSIELMLLAVNINLVAF), and 66–86 (FVLTVAAAEAAIGLAILVVFF).

It belongs to the complex I subunit 4L family. In terms of assembly, NDH-1 is composed of 14 different subunits. Subunits NuoA, H, J, K, L, M, N constitute the membrane sector of the complex.

It localises to the cell inner membrane. The catalysed reaction is a quinone + NADH + 5 H(+)(in) = a quinol + NAD(+) + 4 H(+)(out). Functionally, NDH-1 shuttles electrons from NADH, via FMN and iron-sulfur (Fe-S) centers, to quinones in the respiratory chain. The immediate electron acceptor for the enzyme in this species is believed to be ubiquinone. Couples the redox reaction to proton translocation (for every two electrons transferred, four hydrogen ions are translocated across the cytoplasmic membrane), and thus conserves the redox energy in a proton gradient. The protein is NADH-quinone oxidoreductase subunit K of Parvibaculum lavamentivorans (strain DS-1 / DSM 13023 / NCIMB 13966).